The chain runs to 516 residues: Coiled-coil domain-containing protein 149 (516 aa).

Over residues 1 to 18 (MANQLRERHQSLKKKYGE) the composition is skewed to basic and acidic residues. The tract at residues 1 to 29 (MANQLRERHQSLKKKYGELIDGDPSVPPE) is disordered. 2 coiled-coil regions span residues 1 to 195 (MANQ…ALEK) and 259 to 286 (IQHQRQTNKILGNRVAELEKKLRTLEVS). The span at 321–332 (PHHKPLTNEEHG) shows a compositional bias: basic and acidic residues. Disordered stretches follow at residues 321 to 350 (PHHKPLTNEEHGQPGVELGSPALDEGSDNE) and 406 to 452 (ETSF…SLGD). Polar residues predominate over residues 414-436 (DSQSTASSQENHDNLQSPFSSPE).

The protein belongs to the CCDC149 family.

The sequence is that of Coiled-coil domain-containing protein 149 (ccdc149) from Xenopus laevis (African clawed frog).